The primary structure comprises 521 residues: Bifunctional purine biosynthesis protein PurH (521 aa).

Residues 1 to 147 (MAKITRALIS…KNNADVTVVV (147 aa)) enclose the MGS-like domain.

The protein belongs to the PurH family.

The enzyme catalyses (6R)-10-formyltetrahydrofolate + 5-amino-1-(5-phospho-beta-D-ribosyl)imidazole-4-carboxamide = 5-formamido-1-(5-phospho-D-ribosyl)imidazole-4-carboxamide + (6S)-5,6,7,8-tetrahydrofolate. It catalyses the reaction IMP + H2O = 5-formamido-1-(5-phospho-D-ribosyl)imidazole-4-carboxamide. It participates in purine metabolism; IMP biosynthesis via de novo pathway; 5-formamido-1-(5-phospho-D-ribosyl)imidazole-4-carboxamide from 5-amino-1-(5-phospho-D-ribosyl)imidazole-4-carboxamide (10-formyl THF route): step 1/1. The protein operates within purine metabolism; IMP biosynthesis via de novo pathway; IMP from 5-formamido-1-(5-phospho-D-ribosyl)imidazole-4-carboxamide: step 1/1. The polypeptide is Bifunctional purine biosynthesis protein PurH (Geobacter metallireducens (strain ATCC 53774 / DSM 7210 / GS-15)).